Reading from the N-terminus, the 276-residue chain is Expansin-like A3 (276 aa).

Positions 1-28 (MAVLLSILSSSFLLLLAASSSSTPRASA) are cleaved as a signal peptide. The Expansin-like EG45 domain occupies 52 to 158 (GGGCGYGAMA…RRIPCDYKDK (107 aa)). N-linked (GlcNAc...) asparagine glycosylation is found at Asn115 and Asn159. The Expansin-like CBD domain maps to 172-255 (NNLVIKFLYQ…NWQPGQVYDT (84 aa)).

This sequence belongs to the expansin family. Expansin-like A subfamily.

It is found in the secreted. The chain is Expansin-like A3 (EXLA3) from Oryza sativa subsp. japonica (Rice).